Consider the following 85-residue polypeptide: UPF0213 protein NP_0776A (85 aa).

In terms of domain architecture, GIY-YIG spans 3-78; sequence ADHYVYVLSC…KSLSRAKKER (76 aa). The span at 58 to 70 shows a compositional bias: basic and acidic residues; the sequence is KSAAMQREHEIKS. A disordered region spans residues 58–85; it reads KSAAMQREHEIKSLSRAKKERLVADETG.

Belongs to the UPF0213 family.

In Natronomonas pharaonis (strain ATCC 35678 / DSM 2160 / CIP 103997 / JCM 8858 / NBRC 14720 / NCIMB 2260 / Gabara) (Halobacterium pharaonis), this protein is UPF0213 protein NP_0776A.